We begin with the raw amino-acid sequence, 163 residues long: Acetolactate synthase isozyme 3 small subunit (163 aa).

The region spanning 4–78 (ILSVLLENES…DVLRVSELGQ (75 aa)) is the ACT domain.

The protein belongs to the acetolactate synthase small subunit family. In terms of assembly, dimer of large and small chains.

The catalysed reaction is 2 pyruvate + H(+) = (2S)-2-acetolactate + CO2. It functions in the pathway amino-acid biosynthesis; L-isoleucine biosynthesis; L-isoleucine from 2-oxobutanoate: step 1/4. The protein operates within amino-acid biosynthesis; L-valine biosynthesis; L-valine from pyruvate: step 1/4. Sensitive to valine inhibition. The polypeptide is Acetolactate synthase isozyme 3 small subunit (ilvH) (Salmonella typhimurium (strain LT2 / SGSC1412 / ATCC 700720)).